A 195-amino-acid chain; its full sequence is NADH-quinone oxidoreductase subunit B (195 aa).

[4Fe-4S] cluster is bound by residues cysteine 74, cysteine 75, cysteine 139, and cysteine 169.

Belongs to the complex I 20 kDa subunit family. In terms of assembly, NDH-1 is composed of 14 different subunits. Subunits NuoB, C, D, E, F, and G constitute the peripheral sector of the complex. The cofactor is [4Fe-4S] cluster.

It is found in the cell inner membrane. It carries out the reaction a quinone + NADH + 5 H(+)(in) = a quinol + NAD(+) + 4 H(+)(out). Its function is as follows. NDH-1 shuttles electrons from NADH, via FMN and iron-sulfur (Fe-S) centers, to quinones in the respiratory chain. The immediate electron acceptor for the enzyme in this species is believed to be ubiquinone. Couples the redox reaction to proton translocation (for every two electrons transferred, four hydrogen ions are translocated across the cytoplasmic membrane), and thus conserves the redox energy in a proton gradient. This is NADH-quinone oxidoreductase subunit B from Methylorubrum populi (strain ATCC BAA-705 / NCIMB 13946 / BJ001) (Methylobacterium populi).